Consider the following 375-residue polypeptide: MSKEKCSLTGGKEKRGELVRSLAWQHLVKQEEEEAVKKEEKEEGEDEEEEGSDSSSDDPNPEPPCMHPDLLELVVDREKCRKIRRQYRQLIYTVQQNREDIVNTASDTLSEALEEANVLFDGVSRTREAALDAQFLVLASDLGKEKAKQLNTDMNFFNPIAFCDLLLLFVGFNWVEEECKEFSDCDDSIVLSFWGMLHEEATSWMLQAETFHFIFGSFKAERSARKPRLGCHKRACKMEGSGDMPTKLRRLDVHANQETTEKEVERILGLLQTYFQKYPDTPVSYFEFVIDPNSFSRTVENIFYVSFIIRDGFARIRLDQDRLPILEPTNVSQVDDESDSYSYCRKQGVISLSLQDWKNIVSTFEISEAMIKNSY.

A coiled-coil region spans residues Ala-23 to Gly-51. Residues Gln-30–Pro-68 form a disordered region. A compositionally biased stretch (acidic residues) spans Glu-42 to Asn-60.

Belongs to the NSE4 family. As to quaternary structure, component of the SMC5-SMC6 complex which consists at least of SMC5, SMC6, NSMCE2, NSMCE1, NSMCE4A or EID3 and NSMCE3; EID3 seems to be a testis-specific subunit. NSMCE1, NSMCE4A or EID3 and NSMCE3 probably form a subcomplex that bridges the head domains of the SMC5:SMC6 heterodimer. Homodimer, and heterodimer with EID2. Interacts with the C-terminal region of CREBBP.

The protein resides in the nucleus. It is found in the cytoplasm. Its subcellular location is the chromosome. The protein localises to the telomere. In terms of biological role, tissue-specific component of the SMC5-SMC6 complex, a complex involved in repair of DNA double-strand breaks by homologous recombination. The complex may promote sister chromatid homologous recombination by recruiting the SMC1-SMC3 cohesin complex to double-strand breaks. The complex is required for telomere maintenance via recombination and mediates sumoylation of shelterin complex (telosome) components. Functionally, acts as a repressor of nuclear receptor-dependent transcription possibly by interfering with CREBBP-dependent coactivation. May function as a coinhibitor of other CREBBP/EP300-dependent transcription factors. The sequence is that of EP300-interacting inhibitor of differentiation 3 from Mus musculus (Mouse).